A 437-amino-acid chain; its full sequence is Phosphomethylpyrimidine synthase (437 aa).

Residues N69, M98, Y127, H163, 185 to 187 (SRG), 226 to 229 (DACR), and E265 contribute to the substrate site. H269 contributes to the Zn(2+) binding site. Position 292 (Y292) interacts with substrate. H333 contacts Zn(2+). 3 residues coordinate [4Fe-4S] cluster: C409, C412, and C416.

Belongs to the ThiC family. The cofactor is [4Fe-4S] cluster.

It carries out the reaction 5-amino-1-(5-phospho-beta-D-ribosyl)imidazole + S-adenosyl-L-methionine = 4-amino-2-methyl-5-(phosphooxymethyl)pyrimidine + CO + 5'-deoxyadenosine + formate + L-methionine + 3 H(+). The protein operates within cofactor biosynthesis; thiamine diphosphate biosynthesis. Catalyzes the synthesis of the hydroxymethylpyrimidine phosphate (HMP-P) moiety of thiamine from aminoimidazole ribotide (AIR) in a radical S-adenosyl-L-methionine (SAM)-dependent reaction. This is Phosphomethylpyrimidine synthase from Clostridium botulinum (strain ATCC 19397 / Type A).